A 648-amino-acid polypeptide reads, in one-letter code: NAD(P)H-quinone oxidoreductase subunit 5, chloroplastic (648 aa).

16 consecutive transmembrane segments (helical) span residues 7–27 (AIWLIPVLPLSASMLSGIGLL), 39–59 (LHGALAIGAMALSFVVSLGVL), 89–109 (VDPLTSTMLVVVTSVALLVMI), 124–144 (FFVYLSIFTTSMLGLVLSPNL), 147–167 (VYGFWELVGMCSYLLVGFWFT), 189–209 (LLLGILALYWMTGSFEFASIA), 215–235 (LLIAIPSLRTIACIACILVFM), 258–278 (TPISALIHAATMVAAGVFLVA), 289–309 (LVMELIAWTGTLTAFLGATMA), 327–347 (LGYMIMALGTGAYSEALFHLT), 354–374 (ALLFLAAGSVIHGMEPVVGFS), 395–415 (AMTFLLGTCSICGIPPLACFW), 432–452 (WLIAWLTAGMTGFYMFRIYFL), 472–492 (LGMVAPLIILAIPTVAIGSLG), 518–538 (LAEFLEMAGSSVGIGLLGISL), and 625–645 (FYILSIIFGVLFGSWLLTTHL).

Belongs to the complex I subunit 5 family. In terms of assembly, NDH is composed of at least 16 different subunits, 5 of which are encoded in the nucleus.

It is found in the plastid. The protein resides in the chloroplast thylakoid membrane. It carries out the reaction a plastoquinone + NADH + (n+1) H(+)(in) = a plastoquinol + NAD(+) + n H(+)(out). The catalysed reaction is a plastoquinone + NADPH + (n+1) H(+)(in) = a plastoquinol + NADP(+) + n H(+)(out). NDH shuttles electrons from NAD(P)H:plastoquinone, via FMN and iron-sulfur (Fe-S) centers, to quinones in the photosynthetic chain and possibly in a chloroplast respiratory chain. The immediate electron acceptor for the enzyme in this species is believed to be plastoquinone. Couples the redox reaction to proton translocation, and thus conserves the redox energy in a proton gradient. The protein is NAD(P)H-quinone oxidoreductase subunit 5, chloroplastic (ndhF) of Nephroselmis olivacea (Green alga).